A 549-amino-acid polypeptide reads, in one-letter code: Antagonist of mitotic exit network protein 1 (549 aa).

Polar residues predominate over residues methionine 1 to serine 11. Residues methionine 1–threonine 39 form a disordered region.

The protein belongs to the AMN1 family. In terms of assembly, interacts with TEM1.

The protein resides in the cytoplasm. Its subcellular location is the nucleus. Its function is as follows. Negative regulator of the mitotic exit network (MEN), required for multiple cell cycle checkpoints. Acts in the daughter cell to inhibit the mitotic exit pathway once MEN has executed its function. Through its binding ability to TEM1, interferes with the TEM1-CDC5 association, required for CDC5 kinase activation and MEN activation. Required for daughter cell separation and chromosome stability. Involved in copper sensitivity. The chain is Antagonist of mitotic exit network protein 1 (AMN1) from Saccharomyces cerevisiae (strain ATCC 204508 / S288c) (Baker's yeast).